Reading from the N-terminus, the 608-residue chain is Extracellular metalloproteinase 5 (608 aa).

An N-terminal signal peptide occupies residues 1–20 (MHGLLLAAAGLLSLPLHVIA). A propeptide spanning residues 21–244 (HPQPSTNLAG…VHNVVDYVSH (224 aa)) is cleaved from the precursor. A glycan (N-linked (GlcNAc...) asparagine) is linked at N285. Position 427 (H427) interacts with Zn(2+). The active site involves E428. H431 serves as a coordination point for Zn(2+). N-linked (GlcNAc...) asparagine glycosylation is present at N591.

Belongs to the peptidase M36 family. The cofactor is Zn(2+).

It localises to the secreted. Secreted metalloproteinase probably acting as a virulence factor. In Trichophyton tonsurans (Scalp ringworm fungus), this protein is Extracellular metalloproteinase 5 (MEP5).